We begin with the raw amino-acid sequence, 79 residues long: Small ribosomal subunit protein bS18 (79 aa).

It belongs to the bacterial ribosomal protein bS18 family. Part of the 30S ribosomal subunit. Forms a tight heterodimer with protein bS6.

Functionally, binds as a heterodimer with protein bS6 to the central domain of the 16S rRNA, where it helps stabilize the platform of the 30S subunit. The chain is Small ribosomal subunit protein bS18 from Nitrobacter hamburgensis (strain DSM 10229 / NCIMB 13809 / X14).